A 339-amino-acid polypeptide reads, in one-letter code: Phenylalanine--tRNA ligase alpha subunit (339 aa).

E250 provides a ligand contact to Mg(2+).

It belongs to the class-II aminoacyl-tRNA synthetase family. Phe-tRNA synthetase alpha subunit type 1 subfamily. As to quaternary structure, tetramer of two alpha and two beta subunits. The cofactor is Mg(2+).

It is found in the cytoplasm. The catalysed reaction is tRNA(Phe) + L-phenylalanine + ATP = L-phenylalanyl-tRNA(Phe) + AMP + diphosphate + H(+). The sequence is that of Phenylalanine--tRNA ligase alpha subunit from Flavobacterium psychrophilum (strain ATCC 49511 / DSM 21280 / CIP 103535 / JIP02/86).